The chain runs to 161 residues: Troponin C, slow skeletal and cardiac muscles (161 aa).

Met1 bears the N-acetylmethionine mark. 4 consecutive EF-hand domains span residues 16–51 (QKNE…LGQN), 52–87 (PTPE…CMKD), 92–127 (KSEE…TGET), and 128–161 (ITED…KGVE). Ca(2+)-binding residues include Asp65, Asp67, Ser69, Thr71, and Glu76. Ser98 carries the phosphoserine modification. Ca(2+)-binding residues include Asp105, Asn107, Asp109, Tyr111, Glu116, Asp141, Asn143, Asp145, Arg147, and Glu152.

Belongs to the troponin C family.

Functionally, troponin is the central regulatory protein of striated muscle contraction. Tn consists of three components: Tn-I which is the inhibitor of actomyosin ATPase, Tn-T which contains the binding site for tropomyosin and Tn-C. The binding of calcium to Tn-C abolishes the inhibitory action of Tn on actin filaments. The protein is Troponin C, slow skeletal and cardiac muscles (TNNC1) of Bos taurus (Bovine).